Here is a 432-residue protein sequence, read N- to C-terminus: Adenylosuccinate synthetase (432 aa).

GTP contacts are provided by residues 13–19 and 41–43; these read GDEGKGK and GHT. The active-site Proton acceptor is the Asp14. Residues Asp14 and Gly41 each contribute to the Mg(2+) site. IMP contacts are provided by residues 14 to 17, 39 to 42, Thr130, Arg144, Gln225, Thr240, and Arg304; these read DEGK and NAGH. The active-site Proton donor is the His42. 300–306 provides a ligand contact to substrate; sequence ATTGRSR. Residues Arg306, 332–334, and 415–417 each bind GTP; these read KLD and STG.

This sequence belongs to the adenylosuccinate synthetase family. In terms of assembly, homodimer. It depends on Mg(2+) as a cofactor.

The protein resides in the cytoplasm. The catalysed reaction is IMP + L-aspartate + GTP = N(6)-(1,2-dicarboxyethyl)-AMP + GDP + phosphate + 2 H(+). Its pathway is purine metabolism; AMP biosynthesis via de novo pathway; AMP from IMP: step 1/2. In terms of biological role, plays an important role in the de novo pathway of purine nucleotide biosynthesis. Catalyzes the first committed step in the biosynthesis of AMP from IMP. This chain is Adenylosuccinate synthetase, found in Yersinia enterocolitica serotype O:8 / biotype 1B (strain NCTC 13174 / 8081).